The sequence spans 217 residues: MPPADHPPPEKMMFQLNLRRRGISDQRVLRAMDNVPRDAFVEQGDREDAWCDTALGIACGQTISQPFVVAYMTERLELGDDQRVLEIGTGSGYQTAILSRLCREVVTVERYRVLADRARARLKHLGYDNVEVLLGDGFDIPGEAGRFDRIMVTAAMEQIPEALTARLEPDGLLIAPVGPQSGRQTLILLRRAPAGMIRKELIDVRFVPALPGIAREL.

The active site involves S64.

It belongs to the methyltransferase superfamily. L-isoaspartyl/D-aspartyl protein methyltransferase family.

The protein localises to the cytoplasm. It carries out the reaction [protein]-L-isoaspartate + S-adenosyl-L-methionine = [protein]-L-isoaspartate alpha-methyl ester + S-adenosyl-L-homocysteine. In terms of biological role, catalyzes the methyl esterification of L-isoaspartyl residues in peptides and proteins that result from spontaneous decomposition of normal L-aspartyl and L-asparaginyl residues. It plays a role in the repair and/or degradation of damaged proteins. The chain is Protein-L-isoaspartate O-methyltransferase from Nitrobacter winogradskyi (strain ATCC 25391 / DSM 10237 / CIP 104748 / NCIMB 11846 / Nb-255).